The chain runs to 194 residues: Protein GrpE 2 (194 aa).

Residues 1–17 (MNDIDKHKKETQTESKN) are compositionally biased toward basic and acidic residues. The disordered stretch occupies residues 1 to 29 (MNDIDKHKKETQTESKNDLNNTTITQNNV). The span at 18 to 29 (DLNNTTITQNNV) shows a compositional bias: polar residues.

It belongs to the GrpE family. In terms of assembly, homodimer.

Its subcellular location is the cytoplasm. Functionally, participates actively in the response to hyperosmotic and heat shock by preventing the aggregation of stress-denatured proteins, in association with DnaK and GrpE. It is the nucleotide exchange factor for DnaK and may function as a thermosensor. Unfolded proteins bind initially to DnaJ; upon interaction with the DnaJ-bound protein, DnaK hydrolyzes its bound ATP, resulting in the formation of a stable complex. GrpE releases ADP from DnaK; ATP binding to DnaK triggers the release of the substrate protein, thus completing the reaction cycle. Several rounds of ATP-dependent interactions between DnaJ, DnaK and GrpE are required for fully efficient folding. The polypeptide is Protein GrpE 2 (Buchnera aphidicola subsp. Baizongia pistaciae (strain Bp)).